Reading from the N-terminus, the 63-residue chain is Large ribosomal subunit protein uL30 (63 aa).

Belongs to the universal ribosomal protein uL30 family. As to quaternary structure, part of the 50S ribosomal subunit.

The polypeptide is Large ribosomal subunit protein uL30 (Rickettsia prowazekii (strain Madrid E)).